The primary structure comprises 535 residues: Glucans biosynthesis protein D 1 (535 aa).

The segment at residues 1–28 (MHRRDLLKQLAAGFLALAPGLTPSTASA) is a signal peptide (tat-type signal). Residues 275 to 287 (RTDRAGDRQSAAR) are insert.

This sequence belongs to the OpgD/OpgG family. Post-translationally, predicted to be exported by the Tat system. The position of the signal peptide cleavage has not been experimentally proven.

The protein resides in the periplasm. It participates in glycan metabolism; osmoregulated periplasmic glucan (OPG) biosynthesis. Functionally, probably involved in the control of the structural glucose backbone of osmoregulated periplasmic glucans (OPGs). The polypeptide is Glucans biosynthesis protein D 1 (opgD1) (Ralstonia nicotianae (strain ATCC BAA-1114 / GMI1000) (Ralstonia solanacearum)).